Consider the following 241-residue polypeptide: Leucyl/phenylalanyl-tRNA--protein transferase (241 aa).

The protein belongs to the L/F-transferase family.

It localises to the cytoplasm. The catalysed reaction is N-terminal L-lysyl-[protein] + L-leucyl-tRNA(Leu) = N-terminal L-leucyl-L-lysyl-[protein] + tRNA(Leu) + H(+). The enzyme catalyses N-terminal L-arginyl-[protein] + L-leucyl-tRNA(Leu) = N-terminal L-leucyl-L-arginyl-[protein] + tRNA(Leu) + H(+). It carries out the reaction L-phenylalanyl-tRNA(Phe) + an N-terminal L-alpha-aminoacyl-[protein] = an N-terminal L-phenylalanyl-L-alpha-aminoacyl-[protein] + tRNA(Phe). In terms of biological role, functions in the N-end rule pathway of protein degradation where it conjugates Leu, Phe and, less efficiently, Met from aminoacyl-tRNAs to the N-termini of proteins containing an N-terminal arginine or lysine. The polypeptide is Leucyl/phenylalanyl-tRNA--protein transferase (Neisseria meningitidis serogroup C (strain 053442)).